A 145-amino-acid chain; its full sequence is 3-dehydroquinate dehydratase (145 aa).

Y23 serves as the catalytic Proton acceptor. Positions 75, 81, and 88 each coordinate substrate. H101 functions as the Proton donor in the catalytic mechanism. Substrate-binding positions include 102-103 (IS) and R112.

The protein belongs to the type-II 3-dehydroquinase family. Homododecamer.

The enzyme catalyses 3-dehydroquinate = 3-dehydroshikimate + H2O. The protein operates within metabolic intermediate biosynthesis; chorismate biosynthesis; chorismate from D-erythrose 4-phosphate and phosphoenolpyruvate: step 3/7. Its function is as follows. Catalyzes a trans-dehydration via an enolate intermediate. The polypeptide is 3-dehydroquinate dehydratase (Caldicellulosiruptor saccharolyticus (strain ATCC 43494 / DSM 8903 / Tp8T 6331)).